Here is a 308-residue protein sequence, read N- to C-terminus: 2-methylisocitrate lyase (308 aa).

54 to 56 lines the substrate pocket; it reads SGG. Residues Asp94 and Asp96 each coordinate Mg(2+). Residues 131-132, Arg166, Glu196, 224-226, Arg255, and Arg284 contribute to the substrate site; these read CG and NIT.

Belongs to the isocitrate lyase/PEP mutase superfamily. Methylisocitrate lyase family. As to quaternary structure, homotetramer; dimer of dimers. The cofactor is Mg(2+).

It catalyses the reaction (2S,3R)-3-hydroxybutane-1,2,3-tricarboxylate = pyruvate + succinate. The protein operates within organic acid metabolism; propanoate degradation. Its function is as follows. Involved in the catabolism of short chain fatty acids (SCFA) via the 2-methylcitrate cycle I (propionate degradation route). Catalyzes the thermodynamically favored C-C bond cleavage reaction of (2R,3S)-2-methylisocitrate to yield pyruvate and succinate via an alpha-carboxy-carbanion intermediate. In Vibrio cholerae serotype O1 (strain ATCC 39315 / El Tor Inaba N16961), this protein is 2-methylisocitrate lyase.